The sequence spans 72 residues: uncharacterized protein (72 aa).

The protein resides in the cytoplasm. It is found in the nucleus. This is an uncharacterized protein from Saccharomyces cerevisiae (strain ATCC 204508 / S288c) (Baker's yeast).